Consider the following 420-residue polypeptide: Protein translocase subunit SecY (420 aa).

10 helical membrane passes run 9-29 (ILITLGFLFLYRVLAYIPIPG), 61-81 (LSIISLGIMPYITSSIIMELL), 104-124 (IVRYLTILITLIQAVSVSVGL), 141-161 (VFMIVSAFSMLTGTMLLMWIG), 173-193 (ISLIIFAGIVSGIPSAISGTF), 203-223 (ILMLIGIVLIVLATIFAIIYV), 257-277 (LSGVIPPIFASALLVFPSTIL), 300-320 (YNILMFLLIIFFAYFYSSIVF), 355-375 (KLTLWGSLYLALISTVPWILV), and 377-397 (AMGVPFYFGGTAVLIVVQVAI).

This sequence belongs to the SecY/SEC61-alpha family. Component of the Sec protein translocase complex. Heterotrimer consisting of SecY, SecE and SecG subunits. The heterotrimers can form oligomers, although 1 heterotrimer is thought to be able to translocate proteins. Interacts with the ribosome. Interacts with SecDF, and other proteins may be involved. Interacts with SecA.

The protein localises to the cell inner membrane. In terms of biological role, the central subunit of the protein translocation channel SecYEG. Consists of two halves formed by TMs 1-5 and 6-10. These two domains form a lateral gate at the front which open onto the bilayer between TMs 2 and 7, and are clamped together by SecE at the back. The channel is closed by both a pore ring composed of hydrophobic SecY resides and a short helix (helix 2A) on the extracellular side of the membrane which forms a plug. The plug probably moves laterally to allow the channel to open. The ring and the pore may move independently. This Helicobacter pylori (strain J99 / ATCC 700824) (Campylobacter pylori J99) protein is Protein translocase subunit SecY.